Here is a 2391-residue protein sequence, read N- to C-terminus: Filaggrin-2 (2391 aa).

The segment at M1 to L81 is S-100-like. 2 consecutive EF-hand domains span residues V8–P43 and D49–A84. Residues D62, D64, D66, R68, and E73 each contribute to the Ca(2+) site. 3 disordered regions span residues A96–R275, S349–Q369, and N406–H2391. A compositionally biased stretch (basic residues) spans G98–R107. Over residues E111–D121 the composition is skewed to acidic residues. Over residues G149–G163 the composition is skewed to basic residues. Polar residues predominate over residues G166–G176. Residues G193–N209 show a composition bias toward basic and acidic residues. The stretch at E245–G289 is one Filaggrin 1 repeat. 2 stretches are compositionally biased toward polar residues: residues G420–F442 and S449–T476. One copy of the Filaggrin 2 repeat lies at S421–Y466. Over residues G480 to Q507 the composition is skewed to gly residues. The span at H508–R562 shows a compositional bias: low complexity. The segment covering G568 to S604 has biased composition (gly residues). A compositionally biased stretch (low complexity) spans G605 to F655. The segment covering G656–S666 has biased composition (gly residues). The segment covering G667–Q734 has biased composition (low complexity). Residues H735–S756 show a composition bias toward gly residues. A compositionally biased stretch (low complexity) spans G757–F807. A compositionally biased stretch (gly residues) spans G808–S831. Over residues G832–F884 the composition is skewed to low complexity. A compositionally biased stretch (gly residues) spans G885–S908. Residues H918 to G956 show a composition bias toward low complexity. Residues Q957 to S972 show a composition bias toward gly residues. 2 stretches are compositionally biased toward low complexity: residues G973 to G982 and S994 to Q1027. One copy of the Filaggrin 3 repeat lies at S1019 to F1051. The span at G1052–S1062 shows a compositional bias: gly residues. Residues G1063 to Q1098 are compositionally biased toward low complexity. A Filaggrin 4 repeat occupies G1097–F1141. The segment covering Q1111–K1137 has biased composition (gly residues). Residues S1148–G1174 are compositionally biased toward low complexity. The span at P1175–D1198 shows a compositional bias: polar residues. The segment covering G1206–Q1220 has biased composition (gly residues). Over residues V1226–H1249 the composition is skewed to polar residues. Residues S1250 to R1263 are compositionally biased toward low complexity. Position 1276 is a phosphoserine (S1276). Polar residues predominate over residues H1329 to Q1343. A compositionally biased stretch (basic and acidic residues) spans S1346 to V1355. Residues Q1366 to H1377 show a composition bias toward polar residues. Positions G1378–T1390 are enriched in basic and acidic residues. The segment covering H1406–T1416 has biased composition (low complexity). A phosphoserine mark is found at S1427 and S1428. A compositionally biased stretch (polar residues) spans R1439–S1459. A Filaggrin 5 repeat occupies G1455 to H1510. Positions T1487–R1496 are enriched in low complexity. Residues S1504 and S1505 each carry the phosphoserine modification. Low complexity predominate over residues H1510–H1529. Residues H1544–E1559 are compositionally biased toward polar residues. Over residues Q1560 to Q1572 the composition is skewed to low complexity. Composition is skewed to basic and acidic residues over residues S1575 to V1584 and Q1605 to G1618. S1579 is modified (phosphoserine). The stretch at E1607–H1662 is one Filaggrin 6 repeat. The segment covering T1627–Q1649 has biased composition (low complexity). The span at S1652–V1661 shows a compositional bias: basic and acidic residues. 2 positions are modified to phosphoserine: S1656 and S1657. 2 stretches are compositionally biased toward low complexity: residues H1662–S1686 and G1711–T1720. Positions Q1755–G1768 are enriched in basic and acidic residues. The stretch at G1757 to H1812 is one Filaggrin 7 repeat. Over residues G1784 to T1795 the composition is skewed to low complexity. 2 positions are modified to phosphoserine: S1800 and S1807. Residues G1834–G1845 show a composition bias toward basic and acidic residues. Low complexity predominate over residues G1849–T1873. Residues G1879–V1888 show a composition bias toward basic and acidic residues. S1883, S1884, and S1959 each carry phosphoserine. Filaggrin repeat units follow at residues D1928–P1964 and P1984–H2039. Composition is skewed to low complexity over residues G1963–H1982 and G2013–T2022. S2034 is modified (phosphoserine). 3 stretches are compositionally biased toward low complexity: residues H2039–G2059, H2114–T2125, and H2162–Q2176. One copy of the Filaggrin 10 repeat lies at G2134 to H2189. Basic and acidic residues predominate over residues S2179 to S2190. 3 stretches are compositionally biased toward low complexity: residues H2201–S2211, Q2219–D2228, and G2238–T2247. A compositionally biased stretch (polar residues) spans G2273–S2288. Residues S2320–H2331 are compositionally biased toward low complexity. Residues S2367–H2391 are compositionally biased toward polar residues.

Belongs to the S100-fused protein family. This sequence in the N-terminal section; belongs to the S-100 family. Post-translationally, deiminated by PADI1, PADI2 or PADI3 in vitro. The deiminated form is degraded by calpain-1/CAPN1 more quickly and into shorter peptides than the intact protein. May be processed by calpain-1/CAPN1 in the uppermost epidermal layers. In terms of tissue distribution, expressed in skin, thymus, stomach and placenta, but not detected in heart, brain, liver, lung, bone marrow, small intestine, spleen, prostate, colon, adrenal gland, kidney, pancreas, mammary gland, bladder, thyroid, salivary gland and trachea. Weakly expressed in esophagus, tonsils and testis (at protein level). In the skin, strongly expressed in the upper stratum granulosum and lower stratum corneum, but not detected in the upper stratum corneum (at protein level). In scalp hair follicles, mainly restricted within the granular and cornified cells surrounding the infundibular outer root sheath, with weak expression in central and proximal outer root sheath (at protein level). Tends to be down-regulated in sporiatic lesions compared to non-lesional skin inthe same patients.

Its subcellular location is the cytoplasm. The protein localises to the cytoplasmic granule. Its function is as follows. Essential for normal cell-cell adhesion in the cornified cell layers. Important for proper integrity and mechanical strength of the stratum corneum of the epidermis. The chain is Filaggrin-2 (FLG2) from Homo sapiens (Human).